The following is a 273-amino-acid chain: tRNA pseudouridine synthase A (273 aa).

Asp52 serves as the catalytic Nucleophile. Residue Tyr110 coordinates substrate.

The protein belongs to the tRNA pseudouridine synthase TruA family. Homodimer.

It catalyses the reaction uridine(38/39/40) in tRNA = pseudouridine(38/39/40) in tRNA. Its function is as follows. Formation of pseudouridine at positions 38, 39 and 40 in the anticodon stem and loop of transfer RNAs. The chain is tRNA pseudouridine synthase A from Cupriavidus pinatubonensis (strain JMP 134 / LMG 1197) (Cupriavidus necator (strain JMP 134)).